The following is a 433-amino-acid chain: uncharacterized protein (433 aa).

11 helical membrane-spanning segments follow: residues 28–48, 56–76, 102–122, 126–146, 164–184, 207–227, 250–270, 304–324, 345–365, 375–395, and 406–426; these read FAALGPGILMASAAVGGSHII, IYGWQLAIIIILANLFKYPFF, IWIFFLLNVFATVINTAAVGL, AILTFVLPVQVPVPTLSFIVI, LSKLIMIALTITTVSAVIIAL, ALGFIVALMGWMPAPIEISAI, FNVGYIGTAILALVFLALGAL, GLIAFIAFMCMFGTTITVIDG, SYLNVAITFAALAGLAIIFYF, FAMIASFVSTPVFAYLNLSLV, and LLWLSLIGLMYLTSFTLLFIA.

Its subcellular location is the cell membrane. This is an uncharacterized protein from Pasteurella multocida (strain Pm70).